Here is a 360-residue protein sequence, read N- to C-terminus: Popeye domain-containing protein 1 (360 aa).

At 1–48 (MNYTESSPLRESTAIGFTPELESIIPVPSNKTTCENWREIHHLVFHVA) the chain is on the extracellular side. Residues Asn-2 and Asn-30 are each glycosylated (N-linked (GlcNAc...) asparagine). Residues 49–69 (NICFAVGLVIPTTLHLHMIFL) traverse the membrane as a helical segment. Position 70 (Arg-70) is a topological domain, cytoplasmic. The chain crosses the membrane as a helical span at residues 71-91 (GMLTLGCTLYIVWATLYRCAL). Residue Asp-92 is a topological domain, extracellular. The helical transmembrane segment at 93–113 (IMIWNSVFLGVNILHLSYLLY) threads the bilayer. Positions 93 to 115 (IMIWNSVFLGVNILHLSYLLYKK) are required for interaction with CAV3. Over 114-360 (KKRPVKIEKE…PNTLKVHQLP (247 aa)) the chain is Cytoplasmic. Residues 136–186 (RVPPDLFRRLTGQFCMIQTLKKGQTYAAEDKTSVDDRLSILLKGKMKVSYR) form a required for interaction with KCNK2 region. A phosphoserine mark is found at Ser-295 and Ser-318. The segment at 317–360 (SSLHVSSPHQRASAKMKPIEEGAEDDDDVFEPASPNTLKVHQLP) is disordered. Acidic residues predominate over residues 337–346 (EGAEDDDDVF). The segment covering 350–360 (SPNTLKVHQLP) has biased composition (polar residues).

Belongs to the popeye family. Homodimer. Homodimerization requires the C-terminus cytoplasmic region. Interacts (via the C-terminus cytoplasmic tail) with TJP1. Interacts (via the C-terminus cytoplasmic tail) with ARHGEF25/GEFT (via the DH domain). Interacts (via the C-terminus cytoplasmic tail) with VAMP3. Interacts with KCNK2; the interaction enhances KCNK2 surface expression and is inhibited by cAMP. Interacts with CAV3. Expressed in epithelial cells (at protein level). Expressed in fetal and adult heart and skeletal muscle.

Its subcellular location is the lateral cell membrane. The protein localises to the cell junction. It is found in the tight junction. It localises to the membrane. The protein resides in the cell membrane. Its subcellular location is the sarcolemma. The protein localises to the caveola. Functionally, cell adhesion molecule involved in the establishment and/or maintenance of cell integrity. Involved in the formation and regulation of the tight junction (TJ) paracellular permeability barrier in epithelial cells. Plays a role in VAMP3-mediated vesicular transport and recycling of different receptor molecules through its interaction with VAMP3. Plays a role in the regulation of cell shape and movement by modulating the Rho-family GTPase activity through its interaction with ARHGEF25/GEFT. Induces primordial adhesive contact and aggregation of epithelial cells in a Ca(2+)-independent manner. Also involved in striated muscle regeneration and repair and in the regulation of cell spreading. Important for the maintenance of cardiac function. Plays a regulatory function in heart rate dynamics mediated, at least in part, through cAMP-binding and, probably, by increasing cell surface expression of the potassium channel KCNK2 and enhancing current density. Is also a caveolae-associated protein important for the preservation of caveolae structural and functional integrity as well as for heart protection against ischemia injury. The polypeptide is Popeye domain-containing protein 1 (Homo sapiens (Human)).